A 161-amino-acid polypeptide reads, in one-letter code: Allophycocyanin alpha-B chain (161 aa).

An N4-methylasparagine modification is found at Asn-71. Cys-81 serves as a coordination point for (2R,3E)-phycocyanobilin.

It belongs to the phycobiliprotein family. Post-translationally, contains one covalently linked bilin chromophore.

The protein localises to the plastid. Its subcellular location is the chloroplast thylakoid membrane. In terms of biological role, allophycocyanin is a photosynthetic bile pigment-protein complex with maximum absorption at approximately 650 nanometers. In Pyropia yezoensis (Susabi-nori), this protein is Allophycocyanin alpha-B chain (apcD).